Reading from the N-terminus, the 284-residue chain is L-ribulose-5-phosphate 3-epimerase UlaE (284 aa).

Belongs to the L-ribulose-5-phosphate 3-epimerase family.

The enzyme catalyses L-ribulose 5-phosphate = L-xylulose 5-phosphate. Its pathway is cofactor degradation; L-ascorbate degradation; D-xylulose 5-phosphate from L-ascorbate: step 3/4. In terms of biological role, catalyzes the isomerization of L-xylulose-5-phosphate to L-ribulose-5-phosphate. Is involved in the anaerobic L-ascorbate utilization. This is L-ribulose-5-phosphate 3-epimerase UlaE from Escherichia coli O45:K1 (strain S88 / ExPEC).